The primary structure comprises 757 residues: Xaa-Pro dipeptidyl-peptidase (757 aa).

Active-site charge relay system residues include Ser-348, Asp-468, and His-498.

It belongs to the peptidase S15 family. As to quaternary structure, homodimer.

The protein localises to the cytoplasm. The enzyme catalyses Hydrolyzes Xaa-Pro-|- bonds to release unblocked, N-terminal dipeptides from substrates including Ala-Pro-|-p-nitroanilide and (sequentially) Tyr-Pro-|-Phe-Pro-|-Gly-Pro-|-Ile.. In terms of biological role, removes N-terminal dipeptides sequentially from polypeptides having unsubstituted N-termini provided that the penultimate residue is proline. In Streptococcus pneumoniae serotype 19F (strain G54), this protein is Xaa-Pro dipeptidyl-peptidase.